We begin with the raw amino-acid sequence, 303 residues long: 1D-myo-inositol 2-acetamido-2-deoxy-alpha-D-glucopyranoside deacetylase (303 aa).

Residues H13, D16, and H147 each coordinate Zn(2+).

The protein belongs to the MshB deacetylase family. Zn(2+) is required as a cofactor.

The catalysed reaction is 1D-myo-inositol 2-acetamido-2-deoxy-alpha-D-glucopyranoside + H2O = 1D-myo-inositol 2-amino-2-deoxy-alpha-D-glucopyranoside + acetate. Functionally, catalyzes the deacetylation of 1D-myo-inositol 2-acetamido-2-deoxy-alpha-D-glucopyranoside (GlcNAc-Ins) in the mycothiol biosynthesis pathway. This is 1D-myo-inositol 2-acetamido-2-deoxy-alpha-D-glucopyranoside deacetylase from Mycobacterium tuberculosis (strain ATCC 25177 / H37Ra).